A 79-amino-acid polypeptide reads, in one-letter code: MTDLPVDKILDTLGLRCPEPVMLTRKTIRHMQQGEILFILADDPATTRDIPSFCEFMDHQLLKSKTDTPPYEYWIKKGI.

C17 functions as the Cysteine persulfide intermediate in the catalytic mechanism.

The protein belongs to the sulfur carrier protein TusA family.

It is found in the cytoplasm. Sulfur carrier protein which probably makes part of a sulfur-relay system. The sequence is that of Sulfur carrier protein TusA from Haemophilus ducreyi (strain 35000HP / ATCC 700724).